The primary structure comprises 534 residues: MPMEVFSLTSTAIPSTLTRRDTAADKPSPHLNLSKYSHFMRYPLTTTLTNNRIRSSSSSSSSIRAQASGSTKSSTAEGIPEKTDSKDDNLVFVAGATGKVGSRTVRELIKLGFKVRAGVRNAQKAGALVQSVKQLKLDGASGGGEAVEKLEIVECDLEKADQIGSALGNASTVICAIGASEKEIFDITGPCRIDYRATKNLVDAATVAKVNHFILVTSLGTNKFGLPAAILNLFWGVLIWKRKAEEALLASGIPYTIVRPGGMERPTDAYKETHNVTLSTEDTLFGGQVSNLQVAELMAIMAKNPDLSYCKIVEVIAETTAPLTPAEKLLTRIPSQRPYIPSPKKVQKADTATVSNTGPSANVVAEVPSIAPQKETASKPVAKTEQPLSPYTAYDDLKPPSSPSPTKPSEKKQINISDAVPTPISSDTPSSIQEIDGISQTTSSSKGKESLSPYAAYPDLKPPSSPSPSVPTTSLSKRDTVVVSSNGPAQLSVEDTPKNEEQHLHEPKSRPLSPYAMYEDLKPPASPSPSFRKS.

A chloroplast-targeting transit peptide spans 1–64 (MPMEVFSLTS…SSSSSSSSIR (64 aa)). Positions 50–83 (NNRIRSSSSSSSSIRAQASGSTKSSTAEGIPEKT) are disordered. Over residues 63-76 (IRAQASGSTKSSTA) the composition is skewed to polar residues. Residue 91–120 (VFVAGATGKVGSRTVRELIKLGFKVRAGVR) coordinates NADP(+). A disordered region spans residues 334 to 534 (PSQRPYIPSP…ASPSPSFRKS (201 aa)). The segment covering 350–360 (DTATVSNTGPS) has biased composition (polar residues). Copy 1 of the repeat occupies 387 to 408 (PLSPYTAYDDLKPPSSPSPTKP). A 3 X 22 AA approximate repeats region spans residues 387-532 (PLSPYTAYDD…PPASPSPSFR (146 aa)). Over residues 421–432 (PTPISSDTPSSI) the composition is skewed to low complexity. Residues 450 to 471 (SLSPYAAYPDLKPPSSPSPSVP) form repeat 2. Pro residues predominate over residues 460–469 (LKPPSSPSPS). The segment covering 495 to 509 (DTPKNEEQHLHEPKS) has biased composition (basic and acidic residues). Repeat 3 spans residues 511–532 (PLSPYAMYEDLKPPASPSPSFR).

Part of the Tic complex. Interacts with TIC40, TIC110 and TIC55. Interacts (via C-terminus) with PETH/FNR.

It is found in the plastid. Its subcellular location is the chloroplast inner membrane. The protein localises to the chloroplast stroma. Involved in protein precursor import into chloroplasts. Part of the redox regulon consisting of TIC32, TIC 55 and TIC62. Has a NADPH-dependent dehydrogenase activity, but only after preincubation with lipids. This is Protein TIC 62, chloroplastic (TIC62) from Pisum sativum (Garden pea).